The following is a 277-amino-acid chain: 3-methyl-2-oxobutanoate hydroxymethyltransferase (277 aa).

Asp53 and Asp96 together coordinate Mg(2+). 3-methyl-2-oxobutanoate-binding positions include 53 to 54 (DS), Asp96, and Lys126. Glu128 is a binding site for Mg(2+). The active-site Proton acceptor is the Glu195.

Belongs to the PanB family. As to quaternary structure, homodecamer; pentamer of dimers. Mg(2+) serves as cofactor.

Its subcellular location is the cytoplasm. The catalysed reaction is 3-methyl-2-oxobutanoate + (6R)-5,10-methylene-5,6,7,8-tetrahydrofolate + H2O = 2-dehydropantoate + (6S)-5,6,7,8-tetrahydrofolate. The protein operates within cofactor biosynthesis; (R)-pantothenate biosynthesis; (R)-pantoate from 3-methyl-2-oxobutanoate: step 1/2. Its function is as follows. Catalyzes the reversible reaction in which hydroxymethyl group from 5,10-methylenetetrahydrofolate is transferred onto alpha-ketoisovalerate to form ketopantoate. The polypeptide is 3-methyl-2-oxobutanoate hydroxymethyltransferase (Prosthecochloris aestuarii (strain DSM 271 / SK 413)).